We begin with the raw amino-acid sequence, 1526 residues long: uncharacterized protein (1526 aa).

16 WD repeats span residues 334 to 376 (CTKE…EHIS), 862 to 901 (KILGSVLTVAFSPDGKLFATGDSGGIVRFWEAATGKELLT), 904 to 945 (GHNS…KTFK), 946 to 985 (GHTSRVRSVVFSPNSLMLASGSSDQTVRLWDISSGECLYI), 988 to 1027 (GHTGWVYSVAFNLDGSMLATGSGDQTVRLWDISSSQCFYI), 1030 to 1069 (GHTSCVRSVVFSSDGAMLASGSDDQTVRLWDISSGNCLYT), 1072 to 1111 (GHTSCVRSVVFSPDGAMLASGGDDQIVRLWDISSGNCLYT), 1114 to 1153 (GYTSWVRFLVFSPNGVTLANGSSDQIVRLWDISSKKCLYT), 1156 to 1195 (GHTNWVNAVAFSPDGATLASGSGDQTVRLWDISSSKCLYI), 1198 to 1237 (GHTSWVNSVVFNPDGSTLASGSSDQTVRLWEINSSKCLCT), 1240 to 1279 (GHTSWVNSVVFNPDGSMLASGSSDKTVRLWDISSSKCLHT), 1282 to 1321 (GHTNWVNSVAFNPDGSMLASGSGDQTVRLWEISSSKCLHT), 1324 to 1363 (GHTSWVSSVTFSPDGTMLASGSDDQTVRLWSISSGECLYT), 1366 to 1405 (GHTNWVGSVIFSPDGAILASGSGDQTVRLWSISSGKCLYT), 1408 to 1447 (GHNNWVGSIVFSPDGTLLASGSDDQTVRLWNISSGECLYT), and 1450 to 1491 (GHIN…KTLK). The Pentapeptide repeat domain maps to 823 to 862 (MVLEGRDLSHTVIIGADFTNTSLRCVNFTEANLAYSVFTK).

This is an uncharacterized protein from Nostoc sp. (strain PCC 7120 / SAG 25.82 / UTEX 2576).